Reading from the N-terminus, the 315-residue chain is Mitochondrial outer membrane import complex protein METAXIN (315 aa).

At Met1 the chain carries N-acetylmethionine. Residues 157-181 (ENAEQREKQIYKRASEAYEALSTRL) are a coiled coil. The chain crosses the membrane as a helical span at residues 195-215 (LDAFLLSHILFIIQALPVTSV). Residues 240 to 277 (ASSSSPSPPLHSFPSSFPRKSSKPKSKPKVEKTEEEKK) are disordered. Residues 267 to 277 (PKVEKTEEEKK) are compositionally biased toward basic and acidic residues. The helical transmembrane segment at 284 to 304 (FFLAAQFLAVVIYVSVMGGGS) threads the bilayer.

It belongs to the metaxin family. In terms of assembly, part of a high molecular weight complex that is distinct from the TOM complex. Interacts with a variety of mitochondrial precursor proteins. Expressed in roots, young cotyledons, flowers and leaves.

The protein localises to the mitochondrion inner membrane. It localises to the mitochondrion outer membrane. Involved in transport of proteins into the mitochondrion. The polypeptide is Mitochondrial outer membrane import complex protein METAXIN (MTX1) (Arabidopsis thaliana (Mouse-ear cress)).